A 105-amino-acid polypeptide reads, in one-letter code: Phosphoribosyl-AMP cyclohydrolase (105 aa).

Residue Asp72 participates in Mg(2+) binding. Cys73 contacts Zn(2+). Mg(2+)-binding residues include Asp74 and Asp76. Zn(2+) contacts are provided by Cys89 and Cys96.

The protein belongs to the PRA-CH family. In terms of assembly, homodimer. Mg(2+) is required as a cofactor. Zn(2+) serves as cofactor.

The protein resides in the cytoplasm. The enzyme catalyses 1-(5-phospho-beta-D-ribosyl)-5'-AMP + H2O = 1-(5-phospho-beta-D-ribosyl)-5-[(5-phospho-beta-D-ribosylamino)methylideneamino]imidazole-4-carboxamide. It functions in the pathway amino-acid biosynthesis; L-histidine biosynthesis; L-histidine from 5-phospho-alpha-D-ribose 1-diphosphate: step 3/9. Functionally, catalyzes the hydrolysis of the adenine ring of phosphoribosyl-AMP. This Listeria monocytogenes serotype 4a (strain HCC23) protein is Phosphoribosyl-AMP cyclohydrolase.